The primary structure comprises 11197 residues: Nonribosomal peptide synthetase 5 (11197 aa).

The tract at residues 19–413 (AQRARKQPDA…DGTLQVVGHK (395 aa)) is adenylation (A) domain 1. Residues 426-452 (HASSSASSVGETPGVTGPISTPMGDSV) form a disordered region. Residues 690–897 (KQLRQFCQEQ…LMDESMKQQI (208 aa)) form a condensation (C) domain 1 region. An adenylation (A) domain 2 region spans residues 918–1310 (DAAQDYPDAP…GRHDGQLKVR (393 aa)). The region spanning 1446-1522 (ADRSPVHMML…DMANNIAISE (77 aa)) is the Carrier 1 domain. Serine 1483 is subject to O-(pantetheine 4'-phosphoryl)serine. The segment at 1952 to 2380 (VEDVYPCSPV…SDISLMDPLS (429 aa)) is condensation (C) domain 2. The adenylation (A) domain 3 stretch occupies residues 2406 to 2805 (VARIEPDKMA…QRKDTQIKIR (400 aa)). A Carrier 2 domain is found at 2945–3021 (DSLTSTEVTI…SLAAFVDYDS (77 aa)). Serine 2982 is modified (O-(pantetheine 4'-phosphoryl)serine). Positions 3041-3481 (EESFALSPIQ…TSTMKSEFTL (441 aa)) are epimerase (E) domain 1. The condensation (C) domain 3 stretch occupies residues 3515 to 3957 (EEIFPCSPMQ…VSPETRCELD (443 aa)). Residues 3976–4371 (FEQQVEKIPD…RRRDNQVKVR (396 aa)) are adenylation (A) domain 4. Residues 4508-4584 (RKLTPMEQQL…ELANHARFKA (77 aa)) form the Carrier 3 domain. The residue at position 4545 (serine 4545) is an O-(pantetheine 4'-phosphoryl)serine. The tract at residues 4603-5022 (FPLLPIQRMF…LNEYTAALRS (420 aa)) is epimerase (E) domain 2. Positions 5069-5501 (ESIYPCSPLQ…LVGDSERQGL (433 aa)) are condensation (C) domain 4. The adenylation (A) domain 5 stretch occupies residues 5521–5918 (EAQVKAIPDN…RRKDTQVKVR (398 aa)). The Carrier 4 domain maps to 6068 to 6141 (SEAEDIIRAV…ALAQFVSQST (74 aa)). Residue serine 6102 is modified to O-(pantetheine 4'-phosphoryl)serine. The segment at 6162–6512 (FSLSPIQQMF…MEILFNYFGQ (351 aa)) is epimerase (E) domain 3. A condensation (C) domain 5 region spans residues 6636–7076 (EEIFPCSPIQ…LVGAETRREM (441 aa)). The adenylation (A) domain 6 stretch occupies residues 7097 to 7491 (ERNSQAMPDR…RRRDNQVKVR (395 aa)). The 77-residue stretch at 7636-7712 (KPKTKMEEHF…DLAGRSRFKN (77 aa)) folds into the Carrier 5 domain. Position 7673 is an O-(pantetheine 4'-phosphoryl)serine (serine 7673). The interval 7733-8162 (ALLPIQRLFF…KYMLETLASQ (430 aa)) is epimerase (E) domain 4. The tract at residues 8205–8638 (EASYPCSPLQ…MLGDSGRKRI (434 aa)) is condensation (C) domain 6. Positions 8660 to 8832 (EAHVKESPNR…DHRATATEIV (173 aa)) are adenylation (A) domain 7. Residues 9173-9248 (SAQTAVVQII…AMAAKAQQIG (76 aa)) form the Carrier 6 domain. Residue serine 9209 is modified to O-(pantetheine 4'-phosphoryl)serine. Residues 9565–9683 (RVKDMRRAIP…LHEVVSALQK (119 aa)) form an epimerase (E) domain 5 region. A condensation (C) domain 7 region spans residues 9721–10116 (VEDVYPTSPM…LVPAKHMEQL (396 aa)). Residues 10136–10529 (DDMVRSTPTA…VGRKDTQIKI (394 aa)) form an adenylation (A) domain 8 region. Residues 10663 to 10749 (LDSSDYVAMQ…TLAVTIKADM (87 aa)) form the Carrier 7 domain. Serine 10708 bears the O-(pantetheine 4'-phosphoryl)serine mark. The segment at 10806–11104 (NFLVTGSTGF…SLRPMSGPEW (299 aa)) is thioesterase (TE) domain.

This sequence belongs to the NRP synthetase family.

It participates in secondary metabolite biosynthesis. Functionally, nonribosomal peptide synthetase; part of the Fg3_54/C64 gene cluster that mediates the biosynthesis of the octapeptide fusaoctaxin A, a virulence factor that is required for cell-to-cell invasiveness of plant host. The 2 nonribosomal peptide synthetases NRPS9 and NRPS5 form an assembly line which likely utilizes GABA as a starter unit (loaded on the unique module M1 of NRPS9) and sequentially incorporates seven extender units composed of the residues L-Ala, L-allo-Ile, L-Ser, L-Val, L-Ser, L-Leu and L-Leu, respectively. During the process, each of the residues that are tethered on modules M3-M7 of NRPS5 containing an E domain can undergo an epimerization reaction to produce a D-configuration before the transpeptidation reaction occurs. The elongation of the peptidyl chain might be terminated by module M8-mediated L-Leu incorporation, followed by R domain-catalyzed 4 electron reduction to release the resulting octapeptide from the assembly line as an alcohol. Fusaoctaxin A is cleaved by the cluster specific ABC transporter FGM5 to the pentapeptide fusapentaxin A and the tripeptide fusatrixin A. The other enzymes from the cluster, FGM1, FGM2, FGM3 and FGM9 seem not to be involved in the biosynthesis of fusaoctaxin A and their functions have still to be determined. This Gibberella zeae (strain ATCC MYA-4620 / CBS 123657 / FGSC 9075 / NRRL 31084 / PH-1) (Wheat head blight fungus) protein is Nonribosomal peptide synthetase 5.